The following is a 116-amino-acid chain: Large ribosomal subunit protein bL19 (116 aa).

Belongs to the bacterial ribosomal protein bL19 family.

This protein is located at the 30S-50S ribosomal subunit interface and may play a role in the structure and function of the aminoacyl-tRNA binding site. The protein is Large ribosomal subunit protein bL19 of Geobacillus sp. (strain WCH70).